A 243-amino-acid chain; its full sequence is Peptidyl-tRNA hydrolase (243 aa).

Tyr14 is a tRNA binding site. Catalysis depends on His19, which acts as the Proton acceptor. 3 residues coordinate tRNA: Phe64, Asn66, and Asn112. Positions Lys190–Lys205 are enriched in basic and acidic residues. Positions Lys190 to Asp243 are disordered. The span at Ala208–Gln221 shows a compositional bias: polar residues.

The protein belongs to the PTH family. As to quaternary structure, monomer.

The protein localises to the cytoplasm. The catalysed reaction is an N-acyl-L-alpha-aminoacyl-tRNA + H2O = an N-acyl-L-amino acid + a tRNA + H(+). Hydrolyzes ribosome-free peptidyl-tRNAs (with 1 or more amino acids incorporated), which drop off the ribosome during protein synthesis, or as a result of ribosome stalling. Functionally, catalyzes the release of premature peptidyl moieties from peptidyl-tRNA molecules trapped in stalled 50S ribosomal subunits, and thus maintains levels of free tRNAs and 50S ribosomes. The protein is Peptidyl-tRNA hydrolase of Rhizobium johnstonii (strain DSM 114642 / LMG 32736 / 3841) (Rhizobium leguminosarum bv. viciae).